The sequence spans 506 residues: Maturase K (506 aa).

This sequence belongs to the intron maturase 2 family. MatK subfamily.

It is found in the plastid. The protein localises to the chloroplast. In terms of biological role, usually encoded in the trnK tRNA gene intron. Probably assists in splicing its own and other chloroplast group II introns. The protein is Maturase K of Lathyrus aphaca (Yellow vetchling).